A 275-amino-acid polypeptide reads, in one-letter code: Diaminopimelate epimerase (275 aa).

Residues asparagine 12, glutamine 45, and asparagine 65 each contribute to the substrate site. Cysteine 74 acts as the Proton donor in catalysis. Substrate is bound by residues 75–76, asparagine 158, asparagine 191, and 209–210; these read GN and ER. Cysteine 218 acts as the Proton acceptor in catalysis. 219–220 contributes to the substrate binding site; sequence GT.

This sequence belongs to the diaminopimelate epimerase family. Homodimer.

Its subcellular location is the cytoplasm. It carries out the reaction (2S,6S)-2,6-diaminopimelate = meso-2,6-diaminopimelate. It participates in amino-acid biosynthesis; L-lysine biosynthesis via DAP pathway; DL-2,6-diaminopimelate from LL-2,6-diaminopimelate: step 1/1. Functionally, catalyzes the stereoinversion of LL-2,6-diaminopimelate (L,L-DAP) to meso-diaminopimelate (meso-DAP), a precursor of L-lysine and an essential component of the bacterial peptidoglycan. This chain is Diaminopimelate epimerase, found in Shewanella baltica (strain OS223).